We begin with the raw amino-acid sequence, 132 residues long: Small ribosomal subunit protein uS11 (132 aa).

This sequence belongs to the universal ribosomal protein uS11 family. As to quaternary structure, part of the 30S ribosomal subunit. Interacts with proteins S7 and S18. Binds to IF-3.

Its function is as follows. Located on the platform of the 30S subunit, it bridges several disparate RNA helices of the 16S rRNA. Forms part of the Shine-Dalgarno cleft in the 70S ribosome. The sequence is that of Small ribosomal subunit protein uS11 from Chlamydia caviae (strain ATCC VR-813 / DSM 19441 / 03DC25 / GPIC) (Chlamydophila caviae).